The chain runs to 272 residues: NAD kinase (272 aa).

Aspartate 50 (proton acceptor) is an active-site residue. Residues 50-51 (DG), 126-127 (NE), arginine 152, aspartate 154, 165-170 (TAYNKS), and alanine 189 contribute to the NAD(+) site.

This sequence belongs to the NAD kinase family. A divalent metal cation is required as a cofactor.

The protein resides in the cytoplasm. It catalyses the reaction NAD(+) + ATP = ADP + NADP(+) + H(+). Involved in the regulation of the intracellular balance of NAD and NADP, and is a key enzyme in the biosynthesis of NADP. Catalyzes specifically the phosphorylation on 2'-hydroxyl of the adenosine moiety of NAD to yield NADP. In Streptococcus pneumoniae serotype 19F (strain G54), this protein is NAD kinase.